We begin with the raw amino-acid sequence, 496 residues long: Stomatal closure-related actin-binding protein 1 (496 aa).

Residues 126-269 (RNKDDVEEAI…FLQLQKKLAM (144 aa)) are a coiled coil.

Belongs to the SCAB family. As to quaternary structure, dimer. Dimerization is required for actin-binding activity. As to expression, expressed in roots, stems, leaves, flowers, siliques and guard cells.

The protein localises to the cytoplasm. Its subcellular location is the cytoskeleton. Plant-specific actin binding protein that bundles and stabilizes microfilaments (MFs). Has no nucleation or capping activity. Regulates MF reorganization during stomatal closure. The binding to F-actin is insensitive to Ca(2+) and pH. Binds weakly to inositol phosphates. The protein is Stomatal closure-related actin-binding protein 1 of Arabidopsis thaliana (Mouse-ear cress).